We begin with the raw amino-acid sequence, 422 residues long: Large ribosomal subunit protein uL4 (422 aa).

The residue at position 2 (Ala2) is an N-acetylalanine. Lys14 is modified (N6-acetyllysine). Arg97 carries the omega-N-methylarginine modification. Lys106 carries the N6-acetyllysine modification. Residue Lys239 forms a Glycyl lysine isopeptide (Lys-Gly) (interchain with G-Cter in SUMO2) linkage. Lys259 carries the N6-acetyllysine modification. At Thr266 the chain carries Phosphothreonine. Ser290 and Ser295 each carry phosphoserine. Citrulline is present on Arg300. Lys327 is covalently cross-linked (Glycyl lysine isopeptide (Lys-Gly) (interchain with G-Cter in SUMO2)). An N6-acetyllysine mark is found at Lys333 and Lys353. The interval 359-422 (EAKSDQKGVQ…PTSEEKKAAA (64 aa)) is disordered. Lys361 carries the N6-acetyllysine; alternate modification. A Glycyl lysine isopeptide (Lys-Gly) (interchain with G-Cter in SUMO1); alternate cross-link involves residue Lys361. Ser362 is modified (phosphoserine). Composition is skewed to basic and acidic residues over residues 376 to 385 (NKEKKAVGDK) and 402 to 422 (PAAEKKPTEKKPTSEEKKAAA).

This sequence belongs to the universal ribosomal protein uL4 family. Component of the large ribosomal subunit. May bind IPO9 with low affinity. Interacts with RBM3. Citrullinated by PADI4.

The protein localises to the cytoplasm. Component of the large ribosomal subunit. The ribosome is a large ribonucleoprotein complex responsible for the synthesis of proteins in the cell. This Bos taurus (Bovine) protein is Large ribosomal subunit protein uL4 (RPL4).